Reading from the N-terminus, the 592-residue chain is 3-hydroxy-3-methylglutaryl-coenzyme A reductase 1 (592 aa).

The tract at residues 1–45 is disordered; that stretch reads MDLRRRPPKPPVTNNNNSNGSFRSYQPRTSDDDHRRRATTIAPPP. Residues 12 to 28 show a composition bias toward polar residues; that stretch reads VTNNNNSNGSFRSYQPR. 2 N-linked (GlcNAc...) asparagine glycosylation sites follow: Asn-16 and Asn-19. Transmembrane regions (helical) follow at residues 47–69 and 97–117; these read ASDA…FFSV and AIIA…IDFV. Positions 118–171 are linker; sequence QSFISRASGDAWDLADTIDDDDHRLVTCSPPTPIVSVAKLPNPEPIVTESLPEE. The catalytic stretch occupies residues 172–592; it reads DEEIVKSVID…GATTTTTTTT (421 aa). The active-site Charge relay system is Glu-265. An N-linked (GlcNAc...) asparagine glycan is attached at Asn-329. Catalysis depends on charge relay system residues Lys-397 and Asp-473. His-571 acts as the Proton donor in catalysis. N-linked (GlcNAc...) asparagine glycosylation is present at Asn-575. Ser-577 is subject to Phosphoserine.

Belongs to the HMG-CoA reductase family. In terms of assembly, interacts (via N-terminus) with B''ALPHA and B''BETA. Post-translationally, inactivated by phosphorylation at Ser-577 by KIN10 activated form. Probably also phosphorylated at additional sites. In terms of tissue distribution, found in all tissues. Isoform Short is expressed at low levels specifically in flowers. Expressed in both the tapetum and microspores.

The protein resides in the endoplasmic reticulum membrane. The enzyme catalyses (R)-mevalonate + 2 NADP(+) + CoA = (3S)-3-hydroxy-3-methylglutaryl-CoA + 2 NADPH + 2 H(+). It participates in metabolic intermediate biosynthesis; (R)-mevalonate biosynthesis; (R)-mevalonate from acetyl-CoA: step 3/3. Its activity is regulated as follows. Regulated at the post-translational level in response to alterations of sphingolipid and sterol biosynthetic pathways. Negatively regulated by a PP2A-dependent dephosphorylation occurring at a site different than Ser-577. Completely inhibited by mevinolin (IC(50) = 12.5 nM). Reversibly inactivated by phosphorylation at Ser-577 by spinach or Brassica oleracea HMGR kinases in a cell-free system. Down-regulated by KIN10 through its phosphorylation at Ser-577. Its function is as follows. Catalyzes the synthesis of mevalonate, the specific precursor of all isoprenoid compounds present in plants. This Arabidopsis thaliana (Mouse-ear cress) protein is 3-hydroxy-3-methylglutaryl-coenzyme A reductase 1.